We begin with the raw amino-acid sequence, 263 residues long: MAVNVYSTSVTSDNLSRHDMLAWINESLQLTLTKIEQLCSGAAYCQFMDMLFPGSVALKKVKFQAKLEHEYIQNFKVLQAGFKRMGVDKIIPVDKLVKGKFQDNFEFVQWFKKFFDANYDGKEYDPVAARQGQETVAPNLVAPVMNKPKKPLGTGSAGPQRPIVAQRTPATPKGGTGMVKKAAGDDESAGLIEQINVLKLTVEDLEKERDFYFGKLRNIELICQENEGENDPVLQRIVEILYATDEGFVIPDEGAPQEEQEEY.

The region spanning 14–116 is the Calponin-homology (CH) domain; the sequence is NLSRHDMLAW…FVQWFKKFFD (103 aa). A disordered region spans residues 150 to 182; that stretch reads KPLGTGSAGPQRPIVAQRTPATPKGGTGMVKKA. The EB1 C-terminal domain occupies 180–250; sequence KKAAGDDESA…LYATDEGFVI (71 aa).

Belongs to the MAPRE family.

It is found in the cytoplasm. The protein localises to the cytoskeleton. Its subcellular location is the microtubule organizing center. It localises to the centrosome. The protein resides in the golgi apparatus. It is found in the spindle. The protein localises to the spindle pole. Plus-end tracking protein (+TIP) that binds to the plus-end of microtubules and regulates the dynamics of the microtubule cytoskeleton. Promotes cytoplasmic microtubule nucleation and elongation. Involved in mitotic spindle positioning by stabilizing microtubules and promoting dynamic connection between astral microtubules and the cortex during mitotic chromosome segregation. The protein is Microtubule-associated protein RP/EB family member 1 (MAPRE1) of Coturnix japonica (Japanese quail).